The sequence spans 229 residues: GTP cyclohydrolase 1 (229 aa).

The disordered stretch occupies residues 1–21; it reads MDAKIKPLRAGKSADARTDFQ. Residues cysteine 118, histidine 121, and cysteine 189 each contribute to the Zn(2+) site.

This sequence belongs to the GTP cyclohydrolase I family. In terms of assembly, toroid-shaped homodecamer, composed of two pentamers of five dimers.

The catalysed reaction is GTP + H2O = 7,8-dihydroneopterin 3'-triphosphate + formate + H(+). Its pathway is cofactor biosynthesis; 7,8-dihydroneopterin triphosphate biosynthesis; 7,8-dihydroneopterin triphosphate from GTP: step 1/1. The protein is GTP cyclohydrolase 1 of Rhodopseudomonas palustris (strain HaA2).